The sequence spans 583 residues: Potassium-transporting ATPase potassium-binding subunit (583 aa).

The next 10 membrane-spanning stretches (helical) occupy residues 3 to 23, 66 to 86, 135 to 155, 177 to 197, 266 to 286, 293 to 313, 402 to 422, 440 to 460, 506 to 526, and 549 to 569; these read NIIW…WPLG, MACV…LLMA, GLTV…FALI, VLYI…EQGV, LEML…GAKI, VAIF…TVQA, GLYG…LMVG, AVVV…LMCL, VLLG…ILAM, and LFIF…FFPA.

Belongs to the KdpA family. In terms of assembly, the system is composed of three essential subunits: KdpA, KdpB and KdpC.

Its subcellular location is the cell inner membrane. Functionally, part of the high-affinity ATP-driven potassium transport (or Kdp) system, which catalyzes the hydrolysis of ATP coupled with the electrogenic transport of potassium into the cytoplasm. This subunit binds the periplasmic potassium ions and delivers the ions to the membrane domain of KdpB through an intramembrane tunnel. The polypeptide is Potassium-transporting ATPase potassium-binding subunit (Desulfovibrio desulfuricans (strain ATCC 27774 / DSM 6949 / MB)).